A 362-amino-acid polypeptide reads, in one-letter code: MQVTAPRTVLLLLSAALALTETWAGSHSMKYFYTAVSRPGRGEPRFISVGYVDDTQFVWFDSDAASPREEPRAPWIEQEGPEYWDRETQISKTNAQTYRESLRNLRGYYNQSEAGSHIIQRMYGCDMGPDGRLLRGYEQYAYDGKDYIALNEDLSSWTAADTAAQITQRKWEAARWAEQLRAYLEGTCVEWLRRYLENGKETLQRADPPKTHVTHHPISDHEATLRCWALGFYPAEITLTWQRDGEDQTQDTELVETRPAGDRTFQKWAAVVVPSGEEQRYTCHVQHEGLPKPLTLRWEPSSQSTIPIVGIVAGLAVLAVVVIGAVVAAVMCRRKSSGGKGGSYSQAASSDSAQGSDVSLTA.

Residues 1 to 24 (MQVTAPRTVLLLLSAALALTETWA) form the signal peptide. The interval 25–114 (GSHSMKYFYT…LRGYYNQSEA (90 aa)) is alpha-1. Residues 25-308 (GSHSMKYFYT…EPSSQSTIPI (284 aa)) are Extracellular-facing. N-linked (GlcNAc...) asparagine glycosylation occurs at N110. An alpha-2 region spans residues 115–206 (GSHIIQRMYG…ENGKETLQRA (92 aa)). 2 disulfides stabilise this stretch: C125–C188 and C227–C283. Residues 207–298 (DPPKTHVTHH…GLPKPLTLRW (92 aa)) form an alpha-3 region. Positions 209-295 (PKTHVTHHPI…QHEGLPKPLT (87 aa)) constitute an Ig-like C1-type domain. Residues 299–308 (EPSSQSTIPI) form a connecting peptide region. Residues 309–332 (VGIVAGLAVLAVVVIGAVVAAVMC) form a helical membrane-spanning segment. The Cytoplasmic segment spans residues 333–362 (RRKSSGGKGGSYSQAASSDSAQGSDVSLTA). Residues 336–362 (SSGGKGGSYSQAASSDSAQGSDVSLTA) are disordered. Low complexity predominate over residues 343-362 (SYSQAASSDSAQGSDVSLTA).

It belongs to the MHC class I family. As to quaternary structure, heterodimer of an alpha chain and a beta chain (beta-2-microglobulin).

It is found in the membrane. Its function is as follows. Involved in the presentation of foreign antigens to the immune system. This Pan troglodytes (Chimpanzee) protein is Patr class I histocompatibility antigen, B-2 alpha chain.